We begin with the raw amino-acid sequence, 268 residues long: 5'-nucleotidase SurE (268 aa).

A divalent metal cation contacts are provided by D8, D9, S40, and N98.

It belongs to the SurE nucleotidase family. A divalent metal cation is required as a cofactor.

The protein localises to the cytoplasm. The catalysed reaction is a ribonucleoside 5'-phosphate + H2O = a ribonucleoside + phosphate. Functionally, nucleotidase that shows phosphatase activity on nucleoside 5'-monophosphates. The protein is 5'-nucleotidase SurE of Trichodesmium erythraeum (strain IMS101).